The primary structure comprises 291 residues: MEPLGLVVHGKAEPFSAALRSLVNNPRYSDVCFVVGQERQEVFAHRCLLACRCNFFQRLLGTEPGPGVPSPVVLSTVPTEAFLAVLEFLYTNSVKLYRHSVLEVLTAAVEYGLEELRELCLQFVVKVLDVDLVCEALQVAVTFGLGQLQERCVAFIEAHSQEALRTRGFLELSAAALLPLLRSDKLCVDEAELVRAARSWARVGAAVLERPVAEVAAPVVKELRLALLAPAELSALEEQNRQEPLIPVEQIVEAWKCHALRRGDEARGAPCRRRRGTLPREHHRFLDLSFK.

In terms of domain architecture, BTB spans 29–98 (SDVCFVVGQE…LYTNSVKLYR (70 aa)). Positions 134–234 (CEALQVAVTF…LALLAPAELS (101 aa)) constitute a BACK domain.

This chain is BTB/POZ domain-containing protein 19 (BTBD19), found in Homo sapiens (Human).